Here is a 219-residue protein sequence, read N- to C-terminus: MADLKVGSTTGGSVIWHQGNFPLNPAGDDVLYKSFKIYSEYNKPQAADNDLVSKANGGTYLNRVIFNRGIQVPGAGNGLTGMFVGPGDGATYDNVNLDIISWYGIGFKSSQGTGPRTIVFNVRDGEISARGNINSQRQVRAEAAAPIAANDLTRKDYVDGAINTVTANANSRVLRSGDTMTGNLTAPNFFSQNPASQPSHVPRFDQIVIKDSVQDFGYY.

In terms of assembly, the distal half-fiber contains two molecules each of Gp36 and Gp37 and one molecule of Gp35.

Its subcellular location is the virion. Structural component of the distal-half tail fiber. The polypeptide is Tail fiber protein p36 (36) (Escherichia coli (Bacteriophage T2)).